The sequence spans 719 residues: Acyl-coenzyme A oxidase (719 aa).

Residues 716–719 carry the Microbody targeting signal motif; the sequence is APKI.

It belongs to the acyl-CoA oxidase family. The cofactor is FAD.

Its subcellular location is the peroxisome. The catalysed reaction is a 2,3-saturated acyl-CoA + O2 = a (2E)-enoyl-CoA + H2O2. It participates in lipid metabolism; peroxisomal fatty acid beta-oxidation. The chain is Acyl-coenzyme A oxidase (POX1) from Komagataella pastoris (Yeast).